Here is a 217-residue protein sequence, read N- to C-terminus: Probable transaldolase (217 aa).

Lys-83 serves as the catalytic Schiff-base intermediate with substrate.

This sequence belongs to the transaldolase family. Type 3B subfamily.

It is found in the cytoplasm. The catalysed reaction is D-sedoheptulose 7-phosphate + D-glyceraldehyde 3-phosphate = D-erythrose 4-phosphate + beta-D-fructose 6-phosphate. The protein operates within carbohydrate degradation; pentose phosphate pathway; D-glyceraldehyde 3-phosphate and beta-D-fructose 6-phosphate from D-ribose 5-phosphate and D-xylulose 5-phosphate (non-oxidative stage): step 2/3. Transaldolase is important for the balance of metabolites in the pentose-phosphate pathway. In Fervidobacterium nodosum (strain ATCC 35602 / DSM 5306 / Rt17-B1), this protein is Probable transaldolase.